The sequence spans 267 residues: Small ribosomal subunit protein eS4 (267 aa).

An S4 RNA-binding domain is found at 42–104 (LPLILVLRNR…TKENFRLLFD (63 aa)).

Belongs to the eukaryotic ribosomal protein eS4 family.

The protein resides in the cytoplasm. In Dictyostelium discoideum (Social amoeba), this protein is Small ribosomal subunit protein eS4 (rps4).